A 533-amino-acid polypeptide reads, in one-letter code: Thromboxane-A synthase (533 aa).

At 1–10 (MEVLGLLKFE) the chain is on the cytoplasmic side. A helical transmembrane segment spans residues 11–31 (VSGTVVTVTLSVVLLALLKWY). Residues 32 to 75 (STSAFSRLRKLGIRHPEPSPFVGNLMFFRQGFWESHLELRERYG) lie on the Lumenal side of the membrane. Residues 76-96 (PLCGYYLGRRMYIVISDPDMI) form a helical membrane-spanning segment. Over 97–223 (KEVLVENFSN…QRVFAFSTPR (127 aa)) the chain is Cytoplasmic. Residues 224-244 (PLLALILSFPSIMVPLARILP) form a helical membrane-spanning segment. Over 245–335 (NKNRDELNGF…LTVDEIAGQA (91 aa)) the chain is Lumenal. Residues 336 to 356 (FLFLIAGHEITTNTLSFITYL) traverse the membrane as a helical segment. At 357-533 (LATHPECQER…NGVYVKIVSR (177 aa)) the chain is on the cytoplasmic side. Cys479 is a binding site for heme.

The protein belongs to the cytochrome P450 family. In terms of assembly, monomer. Heme is required as a cofactor. In terms of tissue distribution, expressed in bone marrow, spleen, lung, thymus, liver, uterus, and macrophages.

The protein resides in the endoplasmic reticulum membrane. It catalyses the reaction prostaglandin H2 = thromboxane A2. The catalysed reaction is prostaglandin H2 = (12S)-hydroxy-(5Z,8E,10E)-heptadecatrienoate + malonaldehyde. The enzyme catalyses a hydroperoxyeicosatetraenoate = an oxoeicosatetraenoate + H2O. It carries out the reaction (15S)-hydroperoxy-(5Z,8Z,11Z,13E)-eicosatetraenoate = 15-oxo-(5Z,8Z,11Z,13E)-eicosatetraenoate + H2O. It catalyses the reaction (15S)-hydroperoxy-(5Z,8Z,11Z,13E)-eicosatetraenoate + AH2 = (15S)-hydroxy-(5Z,8Z,11Z,13E)-eicosatetraenoate + A + H2O. Functionally, catalyzes the conversion of prostaglandin H2 (PGH2) to thromboxane A2 (TXA2), a potent inducer of blood vessel constriction and platelet aggregation. Also cleaves PGH2 to 12-hydroxy-heptadecatrienoicacid (12-HHT) and malondialdehyde, which is known to act as a mediator of DNA damage. 12-HHT and malondialdehyde are formed stoichiometrically in the same amounts as TXA2. Additionally, displays dehydratase activity, toward (15S)-hydroperoxy-(5Z,8Z,11Z,13E)-eicosatetraenoate (15(S)-HPETE) producing 15-KETE and 15-HETE. The protein is Thromboxane-A synthase (Tbxas1) of Rattus norvegicus (Rat).